A 481-amino-acid polypeptide reads, in one-letter code: Glutamate mutase epsilon subunit (481 aa).

R67 lines the L-glutamate pocket. G69 provides a ligand contact to adenosylcob(III)alamin. Residue R99 coordinates L-glutamate. An adenosylcob(III)alamin-binding site is contributed by N122. L-glutamate contacts are provided by residues 148-149 (RH), E170, and Y176. P179 provides a ligand contact to adenosylcob(III)alamin. Y180 contributes to the L-glutamate binding site. Adenosylcob(III)alamin-binding residues include F296, K325, E329, and I333.

The protein belongs to the methylaspartate mutase GlmE subunit family. As to quaternary structure, heterotetramer composed of 2 epsilon subunits (GlmE) and 2 sigma subunits (GlmS). GlmE exists as a homodimer and GlmS as a monomer. It depends on adenosylcob(III)alamin as a cofactor.

It catalyses the reaction (2S,3S)-3-methyl-L-aspartate = L-glutamate. It functions in the pathway amino-acid degradation; L-glutamate degradation via mesaconate pathway; acetate and pyruvate from L-glutamate: step 1/4. Catalyzes the carbon skeleton rearrangement of L-glutamate to L-threo-3-methylaspartate ((2S,3S)-3-methylaspartate). This Escherichia coli O157:H7 protein is Glutamate mutase epsilon subunit.